We begin with the raw amino-acid sequence, 236 residues long: Purine nucleoside phosphorylase DeoD-type (236 aa).

H5 lines the a purine D-ribonucleoside pocket. Residues G21, R25, R44, and 88–91 contribute to the phosphate site; that span reads RVGT. Residues 180-182 and 204-205 each bind a purine D-ribonucleoside; these read EME and SD. D205 functions as the Proton donor in the catalytic mechanism.

The protein belongs to the PNP/UDP phosphorylase family. Homohexamer; trimer of homodimers.

The enzyme catalyses a purine D-ribonucleoside + phosphate = a purine nucleobase + alpha-D-ribose 1-phosphate. It catalyses the reaction a purine 2'-deoxy-D-ribonucleoside + phosphate = a purine nucleobase + 2-deoxy-alpha-D-ribose 1-phosphate. In terms of biological role, catalyzes the reversible phosphorolytic breakdown of the N-glycosidic bond in the beta-(deoxy)ribonucleoside molecules, with the formation of the corresponding free purine bases and pentose-1-phosphate. The protein is Purine nucleoside phosphorylase DeoD-type of Shewanella frigidimarina (strain NCIMB 400).